A 91-amino-acid chain; its full sequence is Small ribosomal subunit protein uS15 (91 aa).

This sequence belongs to the universal ribosomal protein uS15 family. In terms of assembly, part of the 30S ribosomal subunit. Forms a bridge to the 50S subunit in the 70S ribosome, contacting the 23S rRNA.

Functionally, one of the primary rRNA binding proteins, it binds directly to 16S rRNA where it helps nucleate assembly of the platform of the 30S subunit by binding and bridging several RNA helices of the 16S rRNA. In terms of biological role, forms an intersubunit bridge (bridge B4) with the 23S rRNA of the 50S subunit in the ribosome. The polypeptide is Small ribosomal subunit protein uS15 (Rickettsia typhi (strain ATCC VR-144 / Wilmington)).